Here is a 385-residue protein sequence, read N- to C-terminus: Putative RNA methyltransferase YpsC (385 aa).

Residues 44 to 156 (AICRANLWLR…KDQALITLDS (113 aa)) form the THUMP domain.

This sequence belongs to the methyltransferase superfamily. As to quaternary structure, interacts with the RNA polymerase core.

This Bacillus subtilis (strain 168) protein is Putative RNA methyltransferase YpsC (ypsC).